The following is a 141-amino-acid chain: Flagellar assembly factor FliW 1 (141 aa).

Belongs to the FliW family. Interacts with translational regulator CsrA and flagellin(s).

It localises to the cytoplasm. Its function is as follows. Acts as an anti-CsrA protein, binds CsrA and prevents it from repressing translation of its target genes, one of which is flagellin. Binds to flagellin and participates in the assembly of the flagellum. The sequence is that of Flagellar assembly factor FliW 1 from Desulfotalea psychrophila (strain LSv54 / DSM 12343).